A 554-amino-acid chain; its full sequence is U4/U6 small nuclear ribonucleoprotein PRP4-like protein (554 aa).

A compositionally biased stretch (pro residues) spans 48–65; the sequence is APIPMMPHPPVARPPTFR. Positions 48-99 are disordered; that stretch reads APIPMMPHPPVARPPTFRPPVSQNGGVKTSDSDSESDDEHIEISEESKQVRE. Over residues 88–99 the composition is skewed to basic and acidic residues; sequence IEISEESKQVRE. 7 WD repeats span residues 253-292, 296-335, 337-376, 379-418, 421-460, 463-503, and 506-545; these read GDDR…NTIA, DHKE…LQTF, GHLD…ELLL, GHSR…SILV, GHIK…SLYI, AHAN…LVKS, and GHES…DEDE.

The protein localises to the nucleus speckle. Functionally, participates in pre-mRNA splicing. Part of the U4/U5/U6 tri-snRNP complex, one of the building blocks of the spliceosome. Essential for reproduction. In female gametophyte, is necessary for the egg cell and central cell fate determination and hence reproductive success. Involved in a mechanism that prevents accessory cells from adopting gametic cell fate. Modulates egg cell signaling center that regulates the development of all female gametophytic cells. The polypeptide is U4/U6 small nuclear ribonucleoprotein PRP4-like protein (Arabidopsis thaliana (Mouse-ear cress)).